The chain runs to 43 residues: DeltaKappa-actitoxin-Avd4b (43 aa).

Intrachain disulfides connect cysteine 4–cysteine 39, cysteine 6–cysteine 32, and cysteine 22–cysteine 40.

The protein belongs to the sea anemone type 3 (BDS) potassium channel toxin family.

Its subcellular location is the secreted. The protein resides in the nematocyst. Acts as a gating modifier on both Kv and Nav ion channels. Voltage-dependently inhibits voltage-gated potassium channels Kv3 (Kv3.1/KCNC1, Kv3.2/KCNC2 and Kv3.4/KCNC4). Slows inactivation of the voltage-gated sodium channel Nav1.7/SCN9A. Inhibits all Kv3.1, Kv3.2 and Kv3.4 by about 50% when tested at a voltage of +40 mV. May act by binding residues in voltage-sensing domains S3b and S4 of Kv3. Tests have been done on human Nav1.7/SCN9A and rat SCG neurons that mostly carry Nav1.7 channels (EC(50)=300 nM). This toxin also reduces blood pressure. This Anemonia sulcata (Mediterranean snakelocks sea anemone) protein is DeltaKappa-actitoxin-Avd4b.